An 826-amino-acid chain; its full sequence is Protein FAM171B (826 aa).

The signal sequence occupies residues 1-32; it reads MARLCRRVPCTLLLGLAVVLLKARLVPAAARA. Topologically, residues 33–353 are extracellular; sequence ELSRSDLSLI…DSKDITAYHT (321 aa). The interval 52–71 is disordered; it reads QQQQQKQLEEAEEERTEVPG. N108, N113, N213, and N268 each carry an N-linked (GlcNAc...) asparagine glycan. A helical membrane pass occupies residues 354–374; it reads VFLTAILGGTIVIVIGFFAVL. At 375–826 the chain is on the cytoplasmic side; sequence LCYCRDKCGT…REERPLIPIN (452 aa). Disordered stretches follow at residues 429–448, 474–493, and 774–826; these read NAKN…AETE, QNNY…GSKQ, and HPGE…IPIN. Positions 438–448 are enriched in basic and acidic residues; the sequence is QKKEPSKAETE. Residues 474 to 486 are compositionally biased toward polar residues; the sequence is QNNYSRNPTQSLE. Over residues 774-786 the composition is skewed to basic and acidic residues; that stretch reads HPGEESPGRKSTV. S794 is modified (phosphoserine). A compositionally biased stretch (basic and acidic residues) spans 805–826; sequence AKRDSKTNIWKKREERPLIPIN.

The protein belongs to the FAM171 family.

It is found in the cytoplasmic granule. It localises to the membrane. The chain is Protein FAM171B (FAM171B) from Homo sapiens (Human).